Reading from the N-terminus, the 66-residue chain is Sodium channel alpha-toxin Acra8 (66 aa).

The LCN-type CS-alpha/beta domain maps to 2–64 (RDGYIVDDKN…VPIKEKGRCN (63 aa)). 4 disulfides stabilise this stretch: Cys12-Cys63, Cys16-Cys36, Cys22-Cys46, and Cys26-Cys48. Asparagine amide is present on Asn64. Positions 65–66 (GR) are excised as a propeptide.

It belongs to the long (4 C-C) scorpion toxin superfamily. Sodium channel inhibitor family. Alpha subfamily. As to expression, expressed by the venom gland.

Its subcellular location is the secreted. Alpha toxins bind voltage-independently at site-3 of sodium channels (Nav) and inhibit the inactivation of the activated channels, thereby blocking neuronal transmission. The polypeptide is Sodium channel alpha-toxin Acra8 (Androctonus crassicauda (Arabian fat-tailed scorpion)).